A 92-amino-acid polypeptide reads, in one-letter code: Small ribosomal subunit protein uS19 (92 aa).

It belongs to the universal ribosomal protein uS19 family.

Its function is as follows. Protein S19 forms a complex with S13 that binds strongly to the 16S ribosomal RNA. This Staphylococcus aureus (strain Mu3 / ATCC 700698) protein is Small ribosomal subunit protein uS19.